We begin with the raw amino-acid sequence, 732 residues long: Prolyl 3-hydroxylase 3 (732 aa).

The first 19 residues, 1 to 19 (MLRLLRLLLLLLLPPPGSP), serve as a signal peptide directing secretion. The segment covering 15 to 25 (PPGSPEPPEPP) has biased composition (pro residues). Residues 15–35 (PPGSPEPPEPPGLAQLSPGSP) are disordered. TPR repeat units follow at residues 39–72 (PDLLYADGLRAYSAGAWAPAVALLREALRSRAAL), 152–185 (REPYNYLQRAYYQLKKLDLAASAAHTFFVANPTH), 214–247 (YWAAYDTGLELLEQREAALALPQLEEALQGSLAH), and 312–345 (LSQLRRLHEAYAQVGNMSQAMENVLSVLLFYPED). Residues N327 and N458 are each glycosylated (N-linked (GlcNAc...) asparagine). One can recognise a Fe2OG dioxygenase domain in the interval 557–671 (THLVCRSAIE…RCALALWHTW (115 aa)). Fe cation-binding residues include H580, D582, and H652. R662 is an active-site residue. Residues 674 to 703 (EHSEQEWTEAKELLQEEEEEEEEEDILSRD) are a coiled coil. Positions 676–687 (SEQEWTEAKELL) are enriched in basic and acidic residues. The interval 676–732 (SEQEWTEAKELLQEEEEEEEEEDILSRDPSPEPPSHKLQRVQEKAGKPRRVRVREEL) is disordered. Positions 688–698 (QEEEEEEEEED) are enriched in acidic residues. Residues 722–732 (KPRRVRVREEL) show a composition bias toward basic residues. The Prevents secretion from ER signature appears at 729 to 732 (REEL).

Belongs to the leprecan family. Identified in a complex with PLOD1 and P3H4. It depends on Fe cation as a cofactor. Requires L-ascorbate as cofactor. Detected in kidney (at protein level).

The protein localises to the endoplasmic reticulum. It catalyses the reaction L-prolyl-[collagen] + 2-oxoglutarate + O2 = trans-3-hydroxy-L-prolyl-[collagen] + succinate + CO2. Functionally, part of a complex composed of PLOD1, P3H3 and P3H4 that catalyzes hydroxylation of lysine residues in collagen alpha chains and is required for normal assembly and cross-linkling of collagen fibrils. Required for normal hydroxylation of lysine residues in type I collagen chains in skin, bone, tendon, aorta and cornea. Required for normal skin stability via its role in hydroxylation of lysine residues in collagen alpha chains and in collagen fibril assembly. Apparently not required for normal prolyl 3-hydroxylation on collagen chains, possibly because it functions redundantly with other prolyl 3-hydroxylases. This chain is Prolyl 3-hydroxylase 3, found in Mus musculus (Mouse).